The primary structure comprises 653 residues: Elongation factor 4 (653 aa).

Positions 1 to 30 (MRTPCSQHRRDRPSAIGSQLPDADTLDTRQ) are disordered. Residues 50 to 231 (AQIRNFCIIA…EVVRQVPPPQ (182 aa)) form the tr-type G domain. Residues 62–67 (DHGKST) and 178–181 (NKID) contribute to the GTP site.

Belongs to the TRAFAC class translation factor GTPase superfamily. Classic translation factor GTPase family. LepA subfamily.

Its subcellular location is the cell membrane. The catalysed reaction is GTP + H2O = GDP + phosphate + H(+). Required for accurate and efficient protein synthesis under certain stress conditions. May act as a fidelity factor of the translation reaction, by catalyzing a one-codon backward translocation of tRNAs on improperly translocated ribosomes. Back-translocation proceeds from a post-translocation (POST) complex to a pre-translocation (PRE) complex, thus giving elongation factor G a second chance to translocate the tRNAs correctly. Binds to ribosomes in a GTP-dependent manner. The polypeptide is Elongation factor 4 (Mycobacterium bovis (strain ATCC BAA-935 / AF2122/97)).